Consider the following 43-residue polypeptide: DRDSCVDKSQCAKYGYYYQCDECCKKAGDRAGTCEYFKCKCNP.

Disulfide bonds link Cys5–Cys23, Cys11–Cys34, Cys20–Cys39, and Cys24–Cys41.

It belongs to the ergtoxin family. Gamma-KTx 4 subfamily. As to expression, expressed by the venom gland.

The protein localises to the secreted. In terms of biological role, reversibly blocks Kv11/ERG potassium channels. In Centruroides exilicauda (Bark scorpion), this protein is Potassium channel toxin gamma-KTx 4.5.